A 291-amino-acid chain; its full sequence is Capsid protein (291 aa).

Positions 1–14 (MQSRPAQESGSASE) are enriched in polar residues. A disordered region spans residues 1-36 (MQSRPAQESGSASETPARGRPTPSDAPRDEPTNYNN).

It belongs to the potexviruses coat protein family.

The protein resides in the virion. Functionally, required for genome encapsidation. Forms ribonucleoprotein complexes along with TGB1 helicase and viral RNA. The chain is Capsid protein from Lily symptomless virus (LSV).